Consider the following 577-residue polypeptide: Probable HECT-type ubiquitin ligase-interacting protein creD (577 aa).

Disordered stretches follow at residues 376–398 and 428–566; these read LDPA…GTLS and NLHA…EEER. 2 stretches are compositionally biased toward polar residues: residues 428-447 and 460-472; these read NLHA…NQLE and SSGS…TSPE. Over residues 473-486 the composition is skewed to basic and acidic residues; it reads LSRRPSDEVDHDHV. Residues 528-544 show a composition bias toward polar residues; sequence SPQQAHVRSANRSSSYF.

Belongs to the arrestin family. Interacts with hulA.

In terms of biological role, component of the regulatory network controlling carbon source utilization through ubiquitination and deubiquitination involving creA, creB, creC, creD and acrB. May be involved in signaling by recognizing appropriately phosphorylated substrates via its arrestin domains and then recruit a HECT-type ubiquitin ligase such as hulA, leading to ubiquitination of the substrate, providing a link between ubiquitination and phosphorylation in protein regulation and stability. This is Probable HECT-type ubiquitin ligase-interacting protein creD (creD) from Aspergillus terreus (strain NIH 2624 / FGSC A1156).